Reading from the N-terminus, the 316-residue chain is Neuroguidin-B (316 aa).

2 disordered regions span residues 124 to 169 (ENDP…SKVK) and 292 to 316 (VPFM…RRRH). A compositionally biased stretch (acidic residues) spans 145-156 (DERESDSGEEGA). A compositionally biased stretch (basic residues) spans 296–316 (KKSKKGPKKSKKKKGFSRRRH).

It belongs to the SAS10 family. As to quaternary structure, part of the small subunit (SSU) processome, composed of more than 70 proteins and the RNA chaperone small nucleolar RNA (snoRNA) U3.

It is found in the nucleus. The protein resides in the nucleolus. It localises to the chromosome. The protein localises to the centromere. Its subcellular location is the cytoplasm. It is found in the cell projection. The protein resides in the axon. It localises to the dendrite. The protein localises to the filopodium. Functionally, part of the small subunit (SSU) processome, first precursor of the small eukaryotic ribosomal subunit. During the assembly of the SSU processome in the nucleolus, many ribosome biogenesis factors, an RNA chaperone and ribosomal proteins associate with the nascent pre-rRNA and work in concert to generate RNA folding, modifications, rearrangements and cleavage as well as targeted degradation of pre-ribosomal RNA by the RNA exosome. Its dissociation from the complex determines the transition from state pre-A1 to state pre-A1*. May inhibit mRNA translation. This is Neuroguidin-B (ngdn-b) from Xenopus laevis (African clawed frog).